Here is a 123-residue protein sequence, read N- to C-terminus: MPTIKQLIRNTRQPIKNVTKSPALRGCPQRRGTCTRVYTITPKKPNSALRKVARVRLTSGFEITAYIPGIGHNLQEHSVVLVRGGRVKDLPGVRYHIVRGTLDAVGVKDRQQGRSKYGVKKPK.

This sequence belongs to the universal ribosomal protein uS12 family. As to quaternary structure, part of the 30S ribosomal subunit.

It localises to the plastid. Its subcellular location is the chloroplast. Functionally, with S4 and S5 plays an important role in translational accuracy. Located at the interface of the 30S and 50S subunits. The polypeptide is Small ribosomal subunit protein uS12cz/uS12cy (rps12-A) (Drimys granadensis).